Here is a 631-residue protein sequence, read N- to C-terminus: Putative meiotic phospholipase SPO1 (631 aa).

Positions 1 to 17 are cleaved as a signal peptide; the sequence is MQKLLFVFSVLLTVVLA. The tract at residues 24–67 is required for lipid-binding and function in meiosis; sequence QCPSSPLIREAKHELCPEETLYLKKKKIKTKNKLIQFLKSLTEA. The region spanning 24-631 is the PLA2c domain; it reads QCPSSPLIRE…LQCFKDYCYS (608 aa). N-linked (GlcNAc...) asparagine glycans are attached at residues asparagine 233, asparagine 293, and asparagine 303. The chain crosses the membrane as a helical span at residues 376-396; it reads FITATSSSIFNNVLIFIWNLA. Residues asparagine 500, asparagine 536, asparagine 560, asparagine 563, and asparagine 572 are each glycosylated (N-linked (GlcNAc...) asparagine).

Belongs to the lysophospholipase family. In terms of assembly, interacts with SPO23. Glycosylated.

The protein resides in the endoplasmic reticulum membrane. The protein localises to the nucleus membrane. In terms of biological role, regulates spindle pole duplication in meiosis I, but not in mitosis. Required for meiosis I, meiosis II chromosome segregation and spore formation. Binds phosphatidylinositol (4)P mono- and polyphosphates. This is Putative meiotic phospholipase SPO1 (SPO1) from Saccharomyces cerevisiae (strain ATCC 204508 / S288c) (Baker's yeast).